We begin with the raw amino-acid sequence, 138 residues long: NADPH-dependent 7-cyano-7-deazaguanine reductase (138 aa).

Residue cysteine 53 is the Thioimide intermediate of the active site. Catalysis depends on aspartate 60, which acts as the Proton donor. Residues 75 to 77 and 94 to 95 contribute to the substrate site; these read VEL and HE.

Belongs to the GTP cyclohydrolase I family. QueF type 1 subfamily.

The protein resides in the cytoplasm. The enzyme catalyses 7-aminomethyl-7-carbaguanine + 2 NADP(+) = 7-cyano-7-deazaguanine + 2 NADPH + 3 H(+). It functions in the pathway tRNA modification; tRNA-queuosine biosynthesis. Its function is as follows. Catalyzes the NADPH-dependent reduction of 7-cyano-7-deazaguanine (preQ0) to 7-aminomethyl-7-deazaguanine (preQ1). This is NADPH-dependent 7-cyano-7-deazaguanine reductase from Gloeothece citriformis (strain PCC 7424) (Cyanothece sp. (strain PCC 7424)).